We begin with the raw amino-acid sequence, 366 residues long: tRNA N6-adenosine threonylcarbamoyltransferase (366 aa).

A divalent metal cation contacts are provided by H130, H134, and Y151. Residues 151 to 155, D183, G198, E202, and N297 each bind substrate; that span reads YVSGG. D325 contacts a divalent metal cation.

Belongs to the KAE1 / TsaD family. As to quaternary structure, component of the EKC/KEOPS complex composed of at least BUD32, CGI121, GON7, KAE1 and PCC1; the whole complex dimerizes. A divalent metal cation is required as a cofactor.

The protein localises to the cytoplasm. Its subcellular location is the nucleus. The enzyme catalyses L-threonylcarbamoyladenylate + adenosine(37) in tRNA = N(6)-L-threonylcarbamoyladenosine(37) in tRNA + AMP + H(+). Functionally, component of the EKC/KEOPS complex that is required for the formation of a threonylcarbamoyl group on adenosine at position 37 (t(6)A37) in tRNAs that read codons beginning with adenine. The complex is probably involved in the transfer of the threonylcarbamoyl moiety of threonylcarbamoyl-AMP (TC-AMP) to the N6 group of A37. KAE1 likely plays a direct catalytic role in this reaction, but requires other protein(s) of the complex to fulfill this activity. The EKC/KEOPS complex also promotes both telomere uncapping and telomere elongation. The complex is required for efficient recruitment of transcriptional coactivators. The chain is tRNA N6-adenosine threonylcarbamoyltransferase from Cryptococcus neoformans var. neoformans serotype D (strain JEC21 / ATCC MYA-565) (Filobasidiella neoformans).